A 139-amino-acid polypeptide reads, in one-letter code: Large ribosomal subunit protein uL16 (139 aa).

The span at 1 to 20 (MLMPRRVKHRKQHHPTRRGA) shows a compositional bias: basic residues. Residues 1 to 24 (MLMPRRVKHRKQHHPTRRGAAKGG) are disordered.

Belongs to the universal ribosomal protein uL16 family. Part of the 50S ribosomal subunit.

Functionally, binds 23S rRNA and is also seen to make contacts with the A and possibly P site tRNAs. The sequence is that of Large ribosomal subunit protein uL16 from Nocardioides sp. (strain ATCC BAA-499 / JS614).